A 548-amino-acid polypeptide reads, in one-letter code: Chaperonin GroEL (548 aa).

Residues 30–33, Lys51, 87–91, Gly415, and Asp495 each bind ATP; these read TLGP and DGTTT.

Belongs to the chaperonin (HSP60) family. As to quaternary structure, forms a cylinder of 14 subunits composed of two heptameric rings stacked back-to-back. Interacts with the co-chaperonin GroES.

It is found in the cytoplasm. The enzyme catalyses ATP + H2O + a folded polypeptide = ADP + phosphate + an unfolded polypeptide.. In terms of biological role, together with its co-chaperonin GroES, plays an essential role in assisting protein folding. The GroEL-GroES system forms a nano-cage that allows encapsulation of the non-native substrate proteins and provides a physical environment optimized to promote and accelerate protein folding. This Pseudoalteromonas atlantica (strain T6c / ATCC BAA-1087) protein is Chaperonin GroEL.